We begin with the raw amino-acid sequence, 76 residues long: Translation initiation factor IF-1 (76 aa).

The 76-residue stretch at 1–76 (MEDMAKKDGV…TRGRIVYRYK (76 aa)) folds into the S1-like domain.

Belongs to the IF-1 family. As to quaternary structure, component of the 30S ribosomal translation pre-initiation complex which assembles on the 30S ribosome in the order IF-2 and IF-3, IF-1 and N-formylmethionyl-tRNA(fMet); mRNA recruitment can occur at any time during PIC assembly.

It localises to the cytoplasm. Functionally, one of the essential components for the initiation of protein synthesis. Stabilizes the binding of IF-2 and IF-3 on the 30S subunit to which N-formylmethionyl-tRNA(fMet) subsequently binds. Helps modulate mRNA selection, yielding the 30S pre-initiation complex (PIC). Upon addition of the 50S ribosomal subunit IF-1, IF-2 and IF-3 are released leaving the mature 70S translation initiation complex. The protein is Translation initiation factor IF-1 of Renibacterium salmoninarum (strain ATCC 33209 / DSM 20767 / JCM 11484 / NBRC 15589 / NCIMB 2235).